The chain runs to 211 residues: Urease accessory protein UreG (211 aa).

11-18 (GPVGAGKT) contacts GTP.

This sequence belongs to the SIMIBI class G3E GTPase family. UreG subfamily. Homodimer. UreD, UreF and UreG form a complex that acts as a GTP-hydrolysis-dependent molecular chaperone, activating the urease apoprotein by helping to assemble the nickel containing metallocenter of UreC. The UreE protein probably delivers the nickel.

It is found in the cytoplasm. Functionally, facilitates the functional incorporation of the urease nickel metallocenter. This process requires GTP hydrolysis, probably effectuated by UreG. The polypeptide is Urease accessory protein UreG (Actinobacillus pleuropneumoniae serotype 7 (strain AP76)).